The primary structure comprises 675 residues: NADH-ubiquinone oxidoreductase chain 5 (675 aa).

Helical transmembrane passes span Leu-3–Leu-23, Val-27–Tyr-47, Phe-75–Val-95, His-108–Val-127, Phe-132–Tyr-154, Ile-177–Phe-197, Phe-211–Ile-231, Thr-251–Ile-271, Leu-284–Val-304, Val-311–Met-329, Val-334–Gly-354, Tyr-380–Tyr-400, Phe-413–Phe-433, Ser-462–Phe-482, Leu-519–Ile-539, Tyr-564–Leu-584, Leu-593–Phe-613, Tyr-624–Phe-644, and Ser-649–Gly-669.

Belongs to the complex I subunit 5 family.

It localises to the mitochondrion inner membrane. The catalysed reaction is a ubiquinone + NADH + 5 H(+)(in) = a ubiquinol + NAD(+) + 4 H(+)(out). Its function is as follows. Core subunit of the mitochondrial membrane respiratory chain NADH dehydrogenase (Complex I) that is believed to belong to the minimal assembly required for catalysis. Complex I functions in the transfer of electrons from NADH to the respiratory chain. The immediate electron acceptor for the enzyme is believed to be ubiquinone. The protein is NADH-ubiquinone oxidoreductase chain 5 (ND5) of Acanthamoeba castellanii (Amoeba).